We begin with the raw amino-acid sequence, 161 residues long: SsrA-binding protein (161 aa).

The disordered stretch occupies residues 138 to 161; the sequence is DKRTDSKEKDWNRDKARIMKSSLR. Over residues 139-154 the composition is skewed to basic and acidic residues; it reads KRTDSKEKDWNRDKAR.

It belongs to the SmpB family.

The protein localises to the cytoplasm. In terms of biological role, required for rescue of stalled ribosomes mediated by trans-translation. Binds to transfer-messenger RNA (tmRNA), required for stable association of tmRNA with ribosomes. tmRNA and SmpB together mimic tRNA shape, replacing the anticodon stem-loop with SmpB. tmRNA is encoded by the ssrA gene; the 2 termini fold to resemble tRNA(Ala) and it encodes a 'tag peptide', a short internal open reading frame. During trans-translation Ala-aminoacylated tmRNA acts like a tRNA, entering the A-site of stalled ribosomes, displacing the stalled mRNA. The ribosome then switches to translate the ORF on the tmRNA; the nascent peptide is terminated with the 'tag peptide' encoded by the tmRNA and targeted for degradation. The ribosome is freed to recommence translation, which seems to be the essential function of trans-translation. This Aliivibrio fischeri (strain ATCC 700601 / ES114) (Vibrio fischeri) protein is SsrA-binding protein.